We begin with the raw amino-acid sequence, 148 residues long: SsrA-binding protein (148 aa).

The tract at residues 123–148 (KLHDKRETEKKRDWEREKARIMRSAT) is disordered. Residues 126 to 142 (DKRETEKKRDWEREKAR) show a composition bias toward basic and acidic residues.

The protein belongs to the SmpB family.

Its subcellular location is the cytoplasm. Its function is as follows. Required for rescue of stalled ribosomes mediated by trans-translation. Binds to transfer-messenger RNA (tmRNA), required for stable association of tmRNA with ribosomes. tmRNA and SmpB together mimic tRNA shape, replacing the anticodon stem-loop with SmpB. tmRNA is encoded by the ssrA gene; the 2 termini fold to resemble tRNA(Ala) and it encodes a 'tag peptide', a short internal open reading frame. During trans-translation Ala-aminoacylated tmRNA acts like a tRNA, entering the A-site of stalled ribosomes, displacing the stalled mRNA. The ribosome then switches to translate the ORF on the tmRNA; the nascent peptide is terminated with the 'tag peptide' encoded by the tmRNA and targeted for degradation. The ribosome is freed to recommence translation, which seems to be the essential function of trans-translation. The chain is SsrA-binding protein from Burkholderia thailandensis (strain ATCC 700388 / DSM 13276 / CCUG 48851 / CIP 106301 / E264).